The primary structure comprises 395 residues: Protein hedgehog (395 aa).

The signal sequence occupies residues 1–26 (MDNHSSVPWASAASVTCLSLDAKCHS). A compositionally biased stretch (low complexity) spans 26 to 43 (SSSSSCSSKSTASSISAS). The segment at 26–46 (SSSSSCSSKSTASSISASPET) is disordered. Residues 27 to 82 (SSSSCSSKSTASSISASPETQTMRHIAHTQRCLSRLTSLVALLLIVLPMMFSPAHS) constitute a propeptide that is removed on maturation. Cysteine 83 is lipidated: N-palmitoyl cysteine. Residues glutamate 147, glutamate 148, aspartate 153, threonine 183, glutamate 184, aspartate 187, and aspartate 189 each contribute to the Ca(2+) site. Glycine 255 carries Cholesterol glycine ester lipidation.

The protein belongs to the hedgehog family. As to quaternary structure, interacts with shf. The C-terminal part of the hedgehog protein precursor displays an autoproteolysis activity that results in the cleavage of the full-length protein into two parts (N-product and C-product). In addition, the C-terminal part displays a cholesterol transferase activity that results by the covalent attachment of a cholesterol moiety to the C-terminal of the newly generated N-product. The N-product is the active species in both local and long-range signaling, whereas the C-product has no signaling activity. Post-translationally, cholesterylation is required for N-product targeting to lipid rafts and multimerization. In terms of processing, N-palmitoylation by Rasp of the hedgehog N-product, within the secretory pathway, is required for the embryonic and larval patterning activities of the hedgehog signal.

The protein localises to the nucleus. It localises to the cytoplasm. It is found in the cell membrane. It carries out the reaction glycyl-L-cysteinyl-[protein] + cholesterol + H(+) = [protein]-C-terminal glycyl cholesterol ester + N-terminal L-cysteinyl-[protein]. Its function is as follows. The C-terminal part of the hedgehog protein precursor displays an autoproteolysis activity that results in the cleavage of the full-length protein into two parts (N-product and C-product). In addition, the C-terminal part displays a cholesterol transferase activity that results by the covalent attachment of a cholesterol moiety to the C-terminal of the newly generated N-product. Once cleaved, the C-product has no signaling activity and diffuses from the cell. Functionally, the dually lipidated hedgehog protein N-product is a morphogen which is essential for a variety of patterning events during development. Establishes the anterior-posterior axis of the embryonic segments and patterns the larval imaginal disks. Binds to the patched (ptc) receptor, which functions in association with smoothened (smo), to activate the transcription of target genes wingless (wg), decapentaplegic (dpp) and ptc. In the absence of hh, ptc represses the constitutive signaling activity of smo through fused (fu). Essential component of a signaling pathway which regulates the Duox-dependent gut immune response to bacterial uracil; required to activate Cad99C-dependent endosome formation, norpA-dependent Ca2+ mobilization and p38 MAPK, which are essential steps in the Duox-dependent production of reactive oxygen species (ROS) in response to intestinal bacterial infection. During photoreceptor differentiation, it up-regulates transcription of Ubr3, which in turn promotes the hh-signaling pathway by mediating the ubiquitination and degradation of cos. The chain is Protein hedgehog from Drosophila simulans (Fruit fly).